The chain runs to 189 residues: Large ribosomal subunit protein uL5 (189 aa).

This sequence belongs to the universal ribosomal protein uL5 family. As to quaternary structure, part of the 50S ribosomal subunit; part of the 5S rRNA/L5/L18/L25 subcomplex. Contacts the 5S rRNA and the P site tRNA. Forms a bridge to the 30S subunit in the 70S ribosome.

In terms of biological role, this is one of the proteins that bind and probably mediate the attachment of the 5S RNA into the large ribosomal subunit, where it forms part of the central protuberance. In the 70S ribosome it contacts protein S13 of the 30S subunit (bridge B1b), connecting the 2 subunits; this bridge is implicated in subunit movement. Contacts the P site tRNA; the 5S rRNA and some of its associated proteins might help stabilize positioning of ribosome-bound tRNAs. In Kocuria rhizophila (strain ATCC 9341 / DSM 348 / NBRC 103217 / DC2201), this protein is Large ribosomal subunit protein uL5.